The chain runs to 170 residues: Calcineurin subunit B type 1 (170 aa).

EF-hand domains follow at residues 18 to 46 (DEIR…FMSL), 50 to 85 (QQNP…FSVR), 87 to 122 (DKLS…MVGN), and 128 to 163 (QLQQ…TDIH). Residues aspartate 31, aspartate 33, serine 35, glutamate 42, aspartate 63, aspartate 65, asparagine 67, glutamate 69, glutamate 74, aspartate 100, aspartate 102, aspartate 104, tyrosine 106, glutamate 111, aspartate 141, aspartate 143, aspartate 145, lysine 147, and glutamate 152 each contribute to the Ca(2+) site.

The protein belongs to the calcineurin regulatory subunit family. Composed of two components (A and B), the A component is the catalytic subunit and the B component confers calcium sensitivity.

Its function is as follows. Calcineurin is a calcium-binding and calmodulin-binding protein found in all cells from yeast to mammals, and a calcium-dependent, calmodulin-stimulated protein phosphatase. This Drosophila melanogaster (Fruit fly) protein is Calcineurin subunit B type 1 (CanB).